The following is a 266-amino-acid chain: Chymotrypsin-like elastase family member 1 (266 aa).

An N-terminal signal peptide occupies residues 1-16 (MLRLLVFTSLVLYGHS). Positions 17–26 (TQDFPETNAR) are cleaved as a propeptide — activation peptide. The Peptidase S1 domain maps to 27 to 264 (VVGGTAVSKN…YISWINNAIA (238 aa)). A disulfide bridge links C56 with C72. H71 serves as the catalytic Charge relay system. Residues D85, N87, Q90, and E95 each contribute to the Ca(2+) site. N87 carries N-linked (GlcNAc...) asparagine glycosylation. The active-site Charge relay system is D119. 3 cysteine pairs are disulfide-bonded: C153/C220, C184/C200, and C210/C240. The Charge relay system role is filled by S214. N-linked (GlcNAc...) asparagine glycosylation is present at N241.

Belongs to the peptidase S1 family. Elastase subfamily. Ca(2+) serves as cofactor. As to expression, pancreas.

Its subcellular location is the secreted. The catalysed reaction is Hydrolysis of proteins, including elastin. Preferential cleavage: Ala-|-Xaa.. Its function is as follows. Serine proteases that hydrolyze many proteins in addition to elastin. This chain is Chymotrypsin-like elastase family member 1 (CELA1), found in Bos taurus (Bovine).